A 4351-amino-acid chain; its full sequence is MTLVLLGLAILLLHRAACEKSLEETIPPLSWRFTHSLYNATIYENSAPKTYVESPVKMGMYLAEPHWVVKYRIISGDAAGVFKTEEHVVGNFCFLRIRTKSSNTALLNREVRDSYTLIVQASDKSLEFEALTQVVVHILDQNDLKPLFSPPSYRVTISEDRPLKSPICKVTATDADLGQNAEFYYAFNARSEVFAIHPTSGVVTVAGKLNVTRRGKYELQVLAVDRMRKISEGNGFGNLASLVIRVEPVHRKPPAINLVVLNPPEGDEGDIYAIVTVDTNGSGAEVDSLEVVGGDPGKYFKVLRSYAQGNEFNLVAVRDINWAEHPHGFNISLQTHSWSRFPPHSIIRAFHLPSWKLANLRFEKAVYRVKLSEFSPPGSRVALVKVTTALPNLRYSLKPSSRNTAFKLNARTGLITTTKLVDFHEQNQYQLHVKTSLGQATTTVIIDIVDCNNHAPVFNRSSYEGTLDENIPPGTSVLTVTATDQDHGDNGHITYSIAGPKAVPFSIDPLLGVISTTKPMDYELMKRIYTFRVRASDWGSPFRQEKEVSVSLRLKNLNDNQPMFEEVNCTVSLRQDVPVGKSIMAVSAIDMDELQNLKYEIVSGNEQDYFHLNHFSGVISLKRSFMNLTAVRPTIYSLKITASDGKNYASPTTLKVTVVKDPHSEVPVQCDKTGVLTHITKTILQSAGLQSQELGEEEFTSLSNYQINHHSPQFEDHFPQSIDILEQVPINTPLARLAATDPDTGFHGKLVYVISDGNEEGCFDIELETGLLMVAAALDYETTSFYVLNVTVYDLGTPPKSSWKLLTVTVKDWNDNPPRFPPGGYQLTISEDTEVGTTIAELKTEDADSEDNRRVRYTLLTPTEKFSLHPFTGELVVTGHLDRESESQYILKAEARDQPTKGHQLFSVTDLIVTLEDINDNPPQCITEHRRLKVPEDMPLGTVLTFLDASDPDLGPAGEVKYILVEDAHGTFQVHPMTGALSLEKELDFERRAGYNLSFWASDSGKPLSRRTLCHVEVLVMDVNENLHSPHFSSFVYQGQVQENSPAGTPVMVVTAQDDDSGLDGELQYFLRAGTGLETFSINQDTGMLETLAPLDREFTPYYWLTVLAVDRGSVPLSAVTEVYIEVTDINDNIPSMSRPVFYPSVLEDAPLGTSVLQLEAWDPDSSSQGKLTFNLTSGNHLGHFIVHPFTGLLTTAKQLDRENKDEYVLEVTVQDNGDPSLRSTSRVVVCILDVNDNPPMFSHKLFNVRLSERLSPLSPEPVYRLVASDPDEGLNGSVTYSIEESDEESFRIDPVTGVVSSSSTFAAGEYNILTIKATDSGQPALSTSVRLHIEWIPQPRPSSIPLSFDESYYSFTVMETDPVNHMVGVISVEGRPGLFWFHISDGDKDMDFDIEKTTGSIVIARPLDTRRKSSYNLTVEVTDGFHTIATQVHIFMIANINHHRPQFLQDHYEIRVPQDTLPGVELLRVQATDQDHGKGLIYTILSSQDPGSANLFQLDPSSGVLVTVGTLELHSGPSQHILTVMVRDQEMPIKRNFVWVTIHVEDGNLHSPHFTQLRYEANVPDTTAPGTELLQVRAVDADRGANAEIHYSFLKGNSDGFFNIDSLLGIITVAQRLYHVHLTRHALTVKAEDQGSPRRHDLALVVIHVHPSDSSAPVFSKDEYFIEIPESVPIGSPILLLSAGSSSEVTYELREGNKDSVFSMNSYSGLISTQKRLDHEKVPSYRLRIRGSNMAGVFTEVVALVYIIDENDNPPAFGKPTFLGHISEAAPLHSLILGEDNSPLVVRASDSDREANSLLVYKILEPEALKFFKIDPSMGTLTTTSELDFEDTPLFQFNIYVHDQGTPILFAPRSAKVIIHVRDVNDSPPRFSEQIYEVAVVEPIHPGMGLLTVQAEDNDSRVTYSIKTSNADEAVTIHPTTGQISVVNPATLRLFQKFSIRASDGLYHDTAVVKISLTQVLDKSLQFDQDVYRARVTENTPHRKALVILGVHGNHLNDTLSYFLLNGTDLFHMIESAGVLQTRGGTFDREQQDTHEVAVEVRDNRVPQRVAQALVRVSVEDVNDNIPEFQHLPYYTVIQDGTEPGDVLFQVSATDKDLGANGSVTYGFAEDYAYFRIDPYVGDISLKKPFDYQALNKYHLRVIARDSGIPPLQTEVEVHVTVRNKSNPLFQSPYYKVKVPENITLYTPILHTQARSPEGLRLIYNIVEEEPLMLFTTDFKTGVLTVTGPLDYESKNKHVFTVRATDTALGSFSEATVEVLVEDINDNPPTFSQLVYTTSVSEGSPAQTPVIQLLASDQDSGQNQDVSYQIVEDGSDVSKFFRINGSTGEIFTIQELDYETHQHFRVKVRAMDKGDPPLTGETLVVVNVSDINDNPPKFREPQYEANVSELATCGHLVLKVQALDPDIGDTSRLEYLILSGNQDRHFSINSTSGIISMFNLCKKQLDSSYNLRVGASDGVFRATVPVYINTTNANKYSPEFQQNVYEAELAENAKVGTKVIELLAIDKDSGPYGTVDYTIINKLAGERFFINPRGQITTLQKLDRENSTERVIAIKVMARDGGGKVAFCTVKIILTDENDNAPQFKASGYTVSIPSNVSRDSPIIQVLAYDADEGRNADVTYSVDSTEDLAEEIIEVNPTTGVVKVKESLVGLENRAVDFNIKAQDGGPPHWDSLVPVRLQVVPNEIPLPKFSEPLYTFSAPEDLPEGSEIGSVKAVAAQDPIIYSLVQGTTPESNSDDVFSLDQDTGVLKVRKAMDHESTKWYQIDLMAHCPHEDTDLVSLVSVSIQVEDVNDNRPVFEADPYKAFLTENMPGGTTVIQVTANDQDTGSDGQVSYRLSVEPGSNIHELFAVDSESGWITTLQELDCETQQTYRFYVVAFDHGQTIQLSSQALVEVSITDENDNPPRFASEDYRGSVVENNEPGELVATLKTLDADVSDQNRQVTCYITEGDPLGQFSISQVGDEWRISSRKTLDREHIAKYLLRVTASDGKFQASVPVEVFVVDINDNSPQCSQLLYTGKVREDVTPGHFILKVSAIDVDMDTNAQITYSLHGPGAQEFKLDPHTGELTTLTVLDRERKDVYNLVAKATDGGGQSCQAEVTLHIEDVNDNAPRFFPSHCDVAVFDNTTVKTPVAVVFARDPDQGANAQVVYSLTDSADGQFSIDATSGVIRLEKPLQVRASSAVELTVRASDLGTPIPLSTLGTVTVSVVGLEDYLPIFLNAEHSTQVPEDAPIDMEVLHLATLTRPGSEKTGYHITGGNEQGKFRLDAHTGILYVNGSLDFETNPKYFLSIECSRKSSSSLSDVTTIVINVTDVNEHHPRFTHDLYTVRVLENAVVGDVILTVSASDDDGPVNSAITYSLVGGNQLGHFTINPKKGKLQVAKALDWEQTPSYSLRLRATDSGQPPLHEDTEVAVEVVDVNDNPPRFFQLNYSTSVQENSPIGIKVLQLILDDPDSPQNGPPYFFRITEGNTGSVFRVTPDGWLVTAASLSKKAREWYQLHIEVSDSGLPPLSSSTLVRVQVTEQSRYPPSTLPLEISITKGEEEFQGGMIGKIHATDRDPQDTLTYSLEQEGGLDRYFTVGASDGKIIASQGLPHGRYSFNVTVSDGTFTTTTGVHVHVWHMEPEVPQQAVWLGFHQLTPEELVSDHWRNLQRFLSNLLDVKRANIHLASLQPAEVTAGVDVLLVFERHSGTSYDLQELASAIAHSVREIEHSVGIRMRSALPVVPCQGQSCQDQTCQETVSLEPRVGPSYSTARLSILTPRHHLGRNCSCNGTTLRFSGQSYVQYRPLEAQNWQIHFYLKTLQPWALLMFTNETASISLKLANGFSHLEYHCPGGFYGNLSSRYPVNDGQWHSMLLEERDTSVHLLVDITDNASLVIPEECQGLRTERQLLLGGLVPSNPSSNVSLGFEGCLDAVVVNGERLELLGREKKMEGRLETWALSQCCWPGTACSQSPCLNGGSCSPALGSGYLCRCPPPFSGRNCELGRENCTSAPCQEGGTCVSSPEGTSCNCPHPYTGDRCEMEARGCSGGHCLITPEIKRGDWGQQEFLVITVALPLVIIATVGLLLYCRRRKSHKPVTMEDPDLLARSIGVDTQASPAIELDPLNTSSCNNLNQPEPSKTSVPNELVTFGPSSKQRPMVCSVPPRLPPAAVSSHPGHEPIIKRTWSGEELVYPSGAAVWPPTYSRKKHWEYPHPETMQGTLPPSPRRHVGPAVMPDPTGLYGGFPFPLELENKRAPLPPRYSNQNLEDLMPPRPPSPREHLLAPCLNEYTAISYYHSQFRQGGGGPCLAEGGYKGVSMRLSRAGPSYADCEVNGGPATGRSQPRAPPNYEGSDMVESDYGSCEEVMF.

The signal sequence occupies residues 1-18 (MTLVLLGLAILLLHRAAC). The Extracellular portion of the chain corresponds to 19-4050 (EKSLEETIPP…IKRGDWGQQE (4032 aa)). 2 Cadherin domains span residues 34-148 (THSL…KPLF) and 149-256 (SPPS…PPAI). N-linked (GlcNAc...) asparagine glycosylation is found at Asn39, Asn210, Asn280, and Asn330. Cadherin domains follow at residues 363–458 (EKAV…APVF), 459–564 (NRSS…QPMF), 565–669 (EEVN…VPVQ), 716–820 (DHFP…PPRF), 821–925 (PPGG…PPQC), 926–1032 (ITEH…SPHF), 1033–1142 (SSFV…RPVF), 1138–1242 (SRPV…PPMF), 1243–1346 (SHKL…SSIP), 1350–1448 (DESY…RPQF), 1449–1555 (LQDH…SPHF), 1556–1660 (TQLR…APVF), 1661–1758 (SKDE…PPAF), 1759–1872 (GKPT…PPRF), 1873–1968 (SEQI…SLQF), 1969–2070 (DQDV…IPEF), 2071–2171 (QHLP…NPLF), 2172–2272 (QSPY…PPTF), 2273–2379 (SQLV…PPKF), 2380–2481 (REPQ…SPEF), 2482–2585 (QQNV…APQF), 2586–2692 (KASG…LPKF), 2693–2799 (SEPL…RPVF), 2800–2908 (EADP…PPRF), 2909–3013 (ASED…SPQC), 3014–3115 (SQLL…APRF), 3116–3220 (FPSH…LPIF), 3221–3323 (LNAE…HPRF), 3324–3428 (THDL…PPRF), 3429–3533 (FQLN…PPST), and 3534–3631 (LPLE…VPQQ). N-linked (GlcNAc...) asparagine glycans are attached at residues Asn459, Asn568, Asn627, and Asn789. A glycan (N-linked (GlcNAc...) asparagine) is linked at Asn996. Residues Asn1175, Asn1276, and Asn1417 are each glycosylated (N-linked (GlcNAc...) asparagine). 13 N-linked (GlcNAc...) asparagine glycosylation sites follow: Asn1899, Asn1998, Asn2007, Asn2102, Asn2165, Asn2183, Asn2325, Asn2368, Asn2387, Asn2430, Asn2470, Asn2547, and Asn2597. Residues Asn3127, Asn3278, and Asn3312 are each glycosylated (N-linked (GlcNAc...) asparagine). Residues Asn3432, Asn3603, Asn3770, Asn3774, Asn3815, Asn3842, Asn3875, and Asn3906 are each glycosylated (N-linked (GlcNAc...) asparagine). In terms of domain architecture, Laminin G-like spans 3775 to 3946 (GTTLRFSGQS…RLETWALSQC (172 aa)). Disulfide bonds link Cys3914/Cys3946, Cys3953/Cys3964, Cys3958/Cys3974, and Cys3976/Cys3985. 2 EGF-like domains span residues 3949–3986 (PGTACSQSPCLNGGSCSPALGSGYLCRCPPPFSGRNCE) and 3988–4024 (GRENCTSAPCQEGGTCVSSPEGTSCNCPHPYTGDRCE). Asn3991 carries an N-linked (GlcNAc...) asparagine glycan. Cystine bridges form between Cys3992–Cys4003, Cys3997–Cys4012, and Cys4014–Cys4023. The helical transmembrane segment at 4051-4071 (FLVITVALPLVIIATVGLLLY) threads the bilayer. Residues 4072–4351 (CRRRKSHKPV…DYGSCEEVMF (280 aa)) lie on the Cytoplasmic side of the membrane. Residues 4316–4340 (VNGGPATGRSQPRAPPNYEGSDMVE) are disordered.

In terms of assembly, homodimer. Cerebellum-specific expression. Expressed in thin parallel fibers of cerebellar granule cells.

Its subcellular location is the cell membrane. It is found in the cell junction. The protein resides in the golgi apparatus. It localises to the trans-Golgi network. Functionally, involved in the regulation of cell migration. May be involved in mediating the organization of the parallel fibers of granule cells during cerebellar development. This Rattus norvegicus (Rat) protein is Protocadherin Fat 2 (Fat2).